Consider the following 151-residue polypeptide: UPF0178 protein PFL_5989 (151 aa).

It belongs to the UPF0178 family.

The protein is UPF0178 protein PFL_5989 of Pseudomonas fluorescens (strain ATCC BAA-477 / NRRL B-23932 / Pf-5).